The sequence spans 160 residues: Fimbrial protein (160 aa).

Residues 1–7 (MKSLQKG) constitute a propeptide, leader sequence. F8 is modified (N-methylphenylalanine). A helical membrane pass occupies residues 8–28 (FTLIELMIVVAIIGILAAFAI).

This sequence belongs to the N-Me-Phe pilin family. In terms of assembly, the pili are polar flexible filaments of about 5.4 nanometers diameter and 2.5 micrometers average length; they consist of only a single polypeptide chain arranged in a helical configuration of five subunits per turn in the assembled pilus.

It localises to the fimbrium. The protein resides in the membrane. This is Fimbrial protein (fimA) from Dichelobacter nodosus (Bacteroides nodosus).